Here is an 89-residue protein sequence, read N- to C-terminus: Neurotoxin beta-KTx 12 (89 aa).

An N-terminal signal peptide occupies residues 1–20 (MKQYIFFLALIVLVSTFAEA). The propeptide occupies 21-39 (GKKTEILDKVKKVFSKAKD). One can recognise a BetaSPN-type CS-alpha/beta domain in the interval 53-89 (ELGCPFIDKWCEDHCESKKLVGKCENFDCSCVKLGGK). 3 disulfides stabilise this stretch: Cys56–Cys76, Cys63–Cys81, and Cys67–Cys83.

The protein belongs to the long chain scorpion toxin family. Class 2 subfamily. As to expression, expressed by the venom gland.

It is found in the secreted. Functionally, inhibits voltage-gated potassium channel. This chain is Neurotoxin beta-KTx 12, found in Lychas mucronatus (Chinese swimming scorpion).